The following is a 71-amino-acid chain: Translational regulator CsrA (71 aa).

This sequence belongs to the CsrA/RsmA family. Homodimer; the beta-strands of each monomer intercalate to form a hydrophobic core, while the alpha-helices form wings that extend away from the core.

The protein resides in the cytoplasm. A translational regulator that binds mRNA to regulate translation initiation and/or mRNA stability. Usually binds in the 5'-UTR at or near the Shine-Dalgarno sequence preventing ribosome-binding, thus repressing translation. Its main target seems to be the major flagellin gene, while its function is anatagonized by FliW. In Clostridium botulinum (strain Alaska E43 / Type E3), this protein is Translational regulator CsrA.